Here is a 164-residue protein sequence, read N- to C-terminus: NADPH-dependent 7-cyano-7-deazaguanine reductase (164 aa).

C55 (thioimide intermediate) is an active-site residue. D62 serves as the catalytic Proton donor. Substrate is bound by residues 77–79 (VES) and 96–97 (HE).

This sequence belongs to the GTP cyclohydrolase I family. QueF type 1 subfamily.

Its subcellular location is the cytoplasm. The enzyme catalyses 7-aminomethyl-7-carbaguanine + 2 NADP(+) = 7-cyano-7-deazaguanine + 2 NADPH + 3 H(+). It functions in the pathway tRNA modification; tRNA-queuosine biosynthesis. Catalyzes the NADPH-dependent reduction of 7-cyano-7-deazaguanine (preQ0) to 7-aminomethyl-7-deazaguanine (preQ1). In Bacillus velezensis (strain DSM 23117 / BGSC 10A6 / LMG 26770 / FZB42) (Bacillus amyloliquefaciens subsp. plantarum), this protein is NADPH-dependent 7-cyano-7-deazaguanine reductase.